The primary structure comprises 91 residues: Small ribosomal subunit protein uS19 (91 aa).

The protein belongs to the universal ribosomal protein uS19 family.

Protein S19 forms a complex with S13 that binds strongly to the 16S ribosomal RNA. The protein is Small ribosomal subunit protein uS19 of Lactiplantibacillus plantarum (strain ATCC BAA-793 / NCIMB 8826 / WCFS1) (Lactobacillus plantarum).